The chain runs to 71 residues: Ranatuerin-2P (71 aa).

The signal sequence occupies residues 1-20 (MFTMKKSLLLFFFLGTISLS). Residues 21–44 (LCEQERGADEDDGVEITEEEVKRG) constitute a propeptide that is removed on maturation. C66 and C71 are joined by a disulfide.

As to expression, expressed by the skin glands.

The protein localises to the secreted. In terms of biological role, antibacterial activity against Gram-positive bacterium S.aureus and Gram-negative bacterium E.coli. Has activity against C.albicans. This chain is Ranatuerin-2P, found in Lithobates pipiens (Northern leopard frog).